Reading from the N-terminus, the 500-residue chain is Maturase K (500 aa).

Belongs to the intron maturase 2 family. MatK subfamily.

The protein localises to the plastid. It localises to the chloroplast. Its function is as follows. Usually encoded in the trnK tRNA gene intron. Probably assists in splicing its own and other chloroplast group II introns. The polypeptide is Maturase K (Fragaria vesca (Woodland strawberry)).